A 710-amino-acid chain; its full sequence is Adenylosuccinate synthetase (710 aa).

Disordered regions lie at residues 1 to 57 (MPVR…NHAK) and 82 to 112 (MDDE…SAQC). Positions 11–25 (NNSSSGVSNALSSSS) are enriched in low complexity. Residues 32–43 (SPSSRENSTPLS) show a composition bias toward polar residues. Residues 180–186 (GDEGKGK) and 210–212 (GHT) each bind GTP. The active-site Proton acceptor is the Asp-181. Residues Asp-181 and Gly-210 each coordinate Mg(2+). IMP is bound by residues 181 to 184 (DEGK), 208 to 211 (NAGH), Thr-295, Lys-309, Gln-421, Thr-437, and Lys-567. His-211 acts as the Proton donor in catalysis. Position 563 to 569 (563 to 569 (AVTKKPR)) interacts with substrate. Residues Arg-569 and 697–699 (GNG) contribute to the GTP site.

The protein belongs to the adenylosuccinate synthetase family. In terms of assembly, homodimer. Mg(2+) serves as cofactor.

It localises to the cytoplasm. It carries out the reaction IMP + L-aspartate + GTP = N(6)-(1,2-dicarboxyethyl)-AMP + GDP + phosphate + 2 H(+). Its pathway is purine metabolism; AMP biosynthesis via de novo pathway; AMP from IMP: step 1/2. Functionally, plays an important role in the salvage pathway for purine nucleotide biosynthesis. Catalyzes the first committed step in the biosynthesis of AMP from IMP. The sequence is that of Adenylosuccinate synthetase from Leishmania braziliensis.